A 168-amino-acid chain; its full sequence is Gastrula zinc finger protein XlCGF42.1 (168 aa).

C2H2-type zinc fingers lie at residues 6–28 (YSCSDCGKCFTRRWNLSEHRKSH), 34–56 (FCCSVCGKGFSYHSQMKSHYRTH), 62–84 (CICSECGKSFTDHAGLRIHQKYH), 90–112 (FSCSECGKCFTRRSGLTAHLRIH), 118–140 (YTCTECGKCFTCRTDLARHLRIH), and 146–165 (FTCSQCEKSFASHSDLDRHH).

It belongs to the krueppel C2H2-type zinc-finger protein family.

Its subcellular location is the nucleus. Functionally, may be involved in transcriptional regulation. This chain is Gastrula zinc finger protein XlCGF42.1, found in Xenopus laevis (African clawed frog).